The sequence spans 214 residues: Probable transaldolase (214 aa).

The Schiff-base intermediate with substrate role is filled by Lys83.

This sequence belongs to the transaldolase family. Type 3B subfamily.

It is found in the cytoplasm. The enzyme catalyses D-sedoheptulose 7-phosphate + D-glyceraldehyde 3-phosphate = D-erythrose 4-phosphate + beta-D-fructose 6-phosphate. Its pathway is carbohydrate degradation; pentose phosphate pathway; D-glyceraldehyde 3-phosphate and beta-D-fructose 6-phosphate from D-ribose 5-phosphate and D-xylulose 5-phosphate (non-oxidative stage): step 2/3. In terms of biological role, transaldolase is important for the balance of metabolites in the pentose-phosphate pathway. The polypeptide is Probable transaldolase (Brevibacillus brevis (strain 47 / JCM 6285 / NBRC 100599)).